Here is a 492-residue protein sequence, read N- to C-terminus: N-succinylglutamate 5-semialdehyde dehydrogenase (492 aa).

NAD(+) is bound at residue G220–G225. Residues E243 and C277 contribute to the active site.

The protein belongs to the aldehyde dehydrogenase family. AstD subfamily.

The enzyme catalyses N-succinyl-L-glutamate 5-semialdehyde + NAD(+) + H2O = N-succinyl-L-glutamate + NADH + 2 H(+). It functions in the pathway amino-acid degradation; L-arginine degradation via AST pathway; L-glutamate and succinate from L-arginine: step 4/5. In terms of biological role, catalyzes the NAD-dependent reduction of succinylglutamate semialdehyde into succinylglutamate. The sequence is that of N-succinylglutamate 5-semialdehyde dehydrogenase from Shigella boydii serotype 18 (strain CDC 3083-94 / BS512).